The chain runs to 135 residues: Nitrogen fixation protein NifU 1 (135 aa).

A compositionally biased stretch (basic and acidic residues) spans Met1–Lys10. The interval Met1–Ala29 is disordered. Low complexity predominate over residues Ala18–Ala29.

This sequence belongs to the NifU family.

Functionally, may be involved in the formation or repair of [Fe-S] clusters present in iron-sulfur proteins. This is Nitrogen fixation protein NifU 1 (nifU1) from Rhodobacter capsulatus (Rhodopseudomonas capsulata).